A 201-amino-acid polypeptide reads, in one-letter code: Putative manganese efflux pump MntP 2 (201 aa).

6 helical membrane passes run 3–23, 39–59, 65–85, 116–136, 141–161, and 176–196; these read LISVILISIGLSMDAFAVSIT, IGLFFGGFQALMPLIGWSIGI, IAALDHWIALILLSIIGGKMI, LILLAIATSIDALAVGVSFAF, IINTIVIIGSITFVICFIGVM, and ILGGVVLILIGVKIFIQHTNI.

It belongs to the MntP (TC 9.B.29) family.

The protein localises to the cell membrane. Probably functions as a manganese efflux pump. The protein is Putative manganese efflux pump MntP 2 of Clostridium botulinum (strain Langeland / NCTC 10281 / Type F).